The sequence spans 379 residues: Centrosomal protein 43 (379 aa).

Residues 70–102 enclose the LisH domain; sequence DGRLVASLVAEFLQFFNLDFTLAVFQPETSTLQ. The tract at residues 139–196 is disordered; that stretch reads EKGPTTGEGALDLSDVHPPPKSPEGKTSAQTTPSKKANNEANQSDTSVSLSEPKSKSS. T143 is subject to Phosphothreonine. Phosphoserine occurs at positions 152 and 160. Polar residues predominate over residues 163–184; the sequence is GKTSAQTTPSKKANNEANQSDT. T170 carries the phosphothreonine modification. A Phosphoserine modification is found at S182. Positions 185 to 196 are enriched in low complexity; the sequence is SVSLSEPKSKSS. T214 carries the post-translational modification Phosphothreonine. The tract at residues 216–288 is disordered; it reads DGKDKAGLCP…APSLKDSESK (73 aa). Over residues 225–236 the composition is skewed to acidic residues; the sequence is PDEDDMEGDSFF. Positions 239–255 are enriched in basic and acidic residues; the sequence is PIPKPEKTYGLRSEPRK. Residues 266–282 are compositionally biased toward low complexity; that stretch reads APPLKSGLSSLAGAPSL. A phosphoserine mark is found at S281 and S306. At Y317 the chain carries Phosphotyrosine.

It belongs to the CEP43 family. In terms of assembly, homodimer. Part of a ternary complex that contains CEP350, CEP43 and MAPRE1. Interacts directly with CEP350 and MAPRE1. Interacts with CEP19. Interacts (via N-terminus) with CEP350 (via C-terminus).

The protein localises to the cytoplasm. It is found in the cytoskeleton. Its subcellular location is the microtubule organizing center. It localises to the centrosome. The protein resides in the centriole. The protein localises to the cilium basal body. Required for anchoring microtubules to the centrosomes. Required for ciliation. The polypeptide is Centrosomal protein 43 (CEP43) (Macaca fascicularis (Crab-eating macaque)).